A 258-amino-acid polypeptide reads, in one-letter code: Hydroxyethylthiazole kinase (258 aa).

Methionine 37 contacts substrate. ATP-binding residues include arginine 112 and threonine 158. A substrate-binding site is contributed by alanine 185.

The protein belongs to the Thz kinase family. Requires Mg(2+) as cofactor.

The catalysed reaction is 5-(2-hydroxyethyl)-4-methylthiazole + ATP = 4-methyl-5-(2-phosphooxyethyl)-thiazole + ADP + H(+). The protein operates within cofactor biosynthesis; thiamine diphosphate biosynthesis; 4-methyl-5-(2-phosphoethyl)-thiazole from 5-(2-hydroxyethyl)-4-methylthiazole: step 1/1. In terms of biological role, catalyzes the phosphorylation of the hydroxyl group of 4-methyl-5-beta-hydroxyethylthiazole (THZ). This Rhizobium etli (strain ATCC 51251 / DSM 11541 / JCM 21823 / NBRC 15573 / CFN 42) protein is Hydroxyethylthiazole kinase.